A 429-amino-acid chain; its full sequence is Probable exoglucanase GH6D (429 aa).

The first 17 residues, 1-17, serve as a signal peptide directing secretion; it reads MRAVYAILAGLLATGSA. Positions 75 and 77 each coordinate substrate. Catalysis depends on proton donor residues Asp115 and Asp162. Residues Asn206 and Trp209 each coordinate substrate. A glycan (N-linked (GlcNAc...) asparagine) is linked at Asn237. Substrate-binding residues include Asn240, Trp300, Lys328, and Glu332. The segment at 240 to 261 is disordered; it reads NYNPYSTNNPPPYTAGSPSADE. Residues 362–390 are disordered; that stretch reads PEIRADGGGGGSPAPGPSSTAVAPSPSAT. A compositionally biased stretch (low complexity) spans 378–390; it reads PSSTAVAPSPSAT. Residues 394-429 enclose the CBM1 domain; that stretch reads NCAARWAQCGGQGWTGPTCCAQGTCQASNQWYSQCL.

This sequence belongs to the glycosyl hydrolase 6 (cellulase B) family.

It is found in the secreted. Functionally, probable exoglucanase that may play an important function in biomass degradation by catalyzing the hydrolysis of cellulose. This is Probable exoglucanase GH6D from Podospora anserina (strain S / ATCC MYA-4624 / DSM 980 / FGSC 10383) (Pleurage anserina).